The following is a 373-amino-acid chain: GTP cyclohydrolase 1 type 2 homolog (373 aa).

Residues His67, His68, Asp106, His333, and Glu336 each contribute to the a divalent metal cation site.

It belongs to the GTP cyclohydrolase I type 2/NIF3 family. In terms of assembly, homohexamer.

This chain is GTP cyclohydrolase 1 type 2 homolog, found in Listeria monocytogenes serovar 1/2a (strain ATCC BAA-679 / EGD-e).